We begin with the raw amino-acid sequence, 368 residues long: V-type proton ATPase subunit C (368 aa).

The protein belongs to the V-ATPase C subunit family. In terms of assembly, V-ATPase is a heteromultimeric enzyme composed of a peripheral catalytic V1 complex (components A to H) attached to an integral membrane V0 proton pore complex (components: a, c, c', c'' and d).

Its function is as follows. Subunit of the peripheral V1 complex of vacuolar ATPase. Subunit C is necessary for the assembly of the catalytic sector of the enzyme and is likely to have a specific function in its catalytic activity. V-ATPase is responsible for acidifying a variety of intracellular compartments in eukaryotic cells. The polypeptide is V-type proton ATPase subunit C (vatC) (Dictyostelium discoideum (Social amoeba)).